We begin with the raw amino-acid sequence, 156 residues long: Probable low-salt glycan biosynthesis epimerase Agl13 (156 aa).

Residues Arg19, Glu24, 39 to 41, Arg51, His54, and His109 contribute to the substrate site; that span reads MSY.

This sequence belongs to the dTDP-4-dehydrorhamnose 3,5-epimerase family.

Its pathway is protein modification; protein glycosylation. It participates in cell surface structure biogenesis; S-layer biogenesis. Its function is as follows. Epimerase involved in N-glycan biosynthetic pathway that takes place under low-salt conditions (1.75 M instead of 3.4 M). Participates in the formation of the tetrasaccharide present at 'Asn-532' of S-layer glycoprotein Csg, consisting of a sulfated hexose, 2 hexoses and rhamnose. Involved in the addition of final rhamnose (sugar 4) of the tetrasaccharide on the dolichol phosphate carrier. The sequence is that of Probable low-salt glycan biosynthesis epimerase Agl13 (agl13) from Haloferax volcanii (strain ATCC 29605 / DSM 3757 / JCM 8879 / NBRC 14742 / NCIMB 2012 / VKM B-1768 / DS2) (Halobacterium volcanii).